The sequence spans 561 residues: MKNSFFSSLAKFASLSLAFALPTAEVIPSALEERQSCANTATTRSCWGQYSASTNSYTTVPKTGYWLVVQNTTLSADGVSRPTLNFNGTIPGPQITADWGDDVIVHVTNKLTSNGTSIHWHGIRQLNNAQYDGVPGITQCPIAPGGTLTYKFHADNYGSSWYHSHFILQYGDGLFGPLVINGPATANYDVDLGMLFLNDWNHVPVQSLWDKAKTGAPPTLLTGLMNGTNTYNGAGKKFQTTFTPGLKYRIRVVNTAVDGHFQFSIDGHSFQVIAMDFVPIVPYNATSILVSIAQRYDIIVTANAAVGNYWIRAGWQTACSGNTNAANITGILRYTGSSSTADPTTTSTVTASTSCLDEPLASLVPFVPINPVASSIMKTTLTTGGGQWLFNGSSLLLNWTDPTLLTVLNSGNIWPTEYNVIPIESTTANKGWAVLAISGPNGPNHPIHLHGHDFWTLSQGTGAYTATTALNLVNPPRRDVMTLPTGGHLVIAFQIDNPGSWLMHCHIAWHASEGLALQFVESESSILPTIGTADVSTFQNTCAAWKAWTPTEPFPQDDSGI.

The first 20 residues, 1–20, serve as a signal peptide directing secretion; that stretch reads MKNSFFSSLAKFASLSLAFA. Plastocyanin-like domains follow at residues 68-185 and 191-337; these read VVQN…GPAT and DLGM…YTGS. 3 N-linked (GlcNAc...) asparagine glycosylation sites follow: N71, N87, and N114. The Cu cation site is built by H119, H121, H163, and H165. C140 and C542 are disulfide-bonded. 5 N-linked (GlcNAc...) asparagine glycosylation sites follow: N226, N284, N327, N391, and N398. The Plastocyanin-like 3 domain maps to 396–525; that stretch reads LLNWTDPTLL…ALQFVESESS (130 aa). H445, H448, H450, H504, C505, H506, and H510 together coordinate Cu cation.

The protein belongs to the multicopper oxidase family. Requires Cu cation as cofactor.

It is found in the secreted. It carries out the reaction 4 hydroquinone + O2 = 4 benzosemiquinone + 2 H2O. In terms of biological role, lignin degradation and detoxification of lignin-derived products. The polypeptide is Laccase-1 (lcc1) (Botryotinia fuckeliana (Noble rot fungus)).